The primary structure comprises 200 residues: Protein GrpE (200 aa).

A compositionally biased stretch (polar residues) spans 1–11; the sequence is MSNQTNKAQDN. The disordered stretch occupies residues 1–25; it reads MSNQTNKAQDNQVEEIVEGELLNEN.

It belongs to the GrpE family. Homodimer.

Its subcellular location is the cytoplasm. In terms of biological role, participates actively in the response to hyperosmotic and heat shock by preventing the aggregation of stress-denatured proteins, in association with DnaK and GrpE. It is the nucleotide exchange factor for DnaK and may function as a thermosensor. Unfolded proteins bind initially to DnaJ; upon interaction with the DnaJ-bound protein, DnaK hydrolyzes its bound ATP, resulting in the formation of a stable complex. GrpE releases ADP from DnaK; ATP binding to DnaK triggers the release of the substrate protein, thus completing the reaction cycle. Several rounds of ATP-dependent interactions between DnaJ, DnaK and GrpE are required for fully efficient folding. The sequence is that of Protein GrpE from Shewanella pealeana (strain ATCC 700345 / ANG-SQ1).